We begin with the raw amino-acid sequence, 98 residues long: MSMVYINIFLAFTMSLMGLLMYRSHLMSSLLCLEGMMLSLFIMMAVAILNNHFTLASMTPIILLVFAACEAALGLSLLVMVSNTYGTDYVQNLNLLQC.

The next 3 membrane-spanning stretches (helical) occupy residues 1 to 21 (MSMV…GLLM), 29 to 49 (SLLC…VAIL), and 61 to 81 (IILL…LVMV).

Belongs to the complex I subunit 4L family. As to quaternary structure, core subunit of respiratory chain NADH dehydrogenase (Complex I) which is composed of 45 different subunits.

It localises to the mitochondrion inner membrane. The enzyme catalyses a ubiquinone + NADH + 5 H(+)(in) = a ubiquinol + NAD(+) + 4 H(+)(out). Core subunit of the mitochondrial membrane respiratory chain NADH dehydrogenase (Complex I) which catalyzes electron transfer from NADH through the respiratory chain, using ubiquinone as an electron acceptor. Part of the enzyme membrane arm which is embedded in the lipid bilayer and involved in proton translocation. The polypeptide is NADH-ubiquinone oxidoreductase chain 4L (MT-ND4L) (Puma concolor (Mountain lion)).